The following is a 449-amino-acid chain: Glucose-6-phosphate isomerase (449 aa).

The active-site Proton donor is the glutamate 291. Active-site residues include histidine 312 and lysine 426.

It belongs to the GPI family.

It is found in the cytoplasm. It catalyses the reaction alpha-D-glucose 6-phosphate = beta-D-fructose 6-phosphate. It participates in carbohydrate biosynthesis; gluconeogenesis. It functions in the pathway carbohydrate degradation; glycolysis; D-glyceraldehyde 3-phosphate and glycerone phosphate from D-glucose: step 2/4. Its function is as follows. Catalyzes the reversible isomerization of glucose-6-phosphate to fructose-6-phosphate. In Pediococcus pentosaceus (strain ATCC 25745 / CCUG 21536 / LMG 10740 / 183-1w), this protein is Glucose-6-phosphate isomerase.